A 284-amino-acid polypeptide reads, in one-letter code: UPF0294 protein VV2535 (284 aa).

The protein belongs to the UPF0294 family.

The protein localises to the cytoplasm. The sequence is that of UPF0294 protein VV2535 from Vibrio vulnificus (strain YJ016).